We begin with the raw amino-acid sequence, 398 residues long: Neuroplastin (398 aa).

Positions 1-28 (MSGSSLPSALALSLLLVSGSLLPGPGAA) are cleaved as a signal peptide. Ig-like domains follow at residues 29–134 (QNAG…PSIT), 148–235 (PRIV…IEVK), and 238–329 (PDIT…SVVT). The Extracellular segment spans residues 29–339 (QNAGFVKSPM…VLRVRSHLAP (311 aa)). Cysteine 52 and cysteine 116 are oxidised to a cystine. Positions 149–161 (RIVTSEEVIIRDS) are narpin; mediates binding with FGFR1 and has antidepressant-like activity. Cysteine 170 and cysteine 218 are oxidised to a cystine. N-linked (GlcNAc...) asparagine glycosylation is found at asparagine 171, asparagine 197, asparagine 229, asparagine 284, asparagine 296, and asparagine 317. A disulfide bond links cysteine 259 and cysteine 316. The helical transmembrane segment at 340-360 (LWPFLGILAEIIILVVIIVVY) threads the bilayer. The Cytoplasmic segment spans residues 361–398 (EKRKRPDEVPDDDEPAGPMKTNSTNNHKDKNLRQRNTN). Residues 365–398 (RPDEVPDDDEPAGPMKTNSTNNHKDKNLRQRNTN) form a disordered region.

Interacts with ATP2B1; this interaction stabilizes ATP2B1 and increases ATPase activity; this interaction controls T cell calcium homeostasis following T cell activation. Interacts with XKR8; promoting its localization at the cell membrane. As to expression, isoform 1 is ubiquitously expressed. Isoform 2 is expressed in brain cortex and cerebellum (at protein level).

The protein localises to the cell membrane. The protein resides in the postsynaptic density. Probable homophilic and heterophilic cell adhesion molecule involved in long term potentiation at hippocampal excitatory synapses through activation of p38MAPK. May also regulate neurite outgrowth by activating the FGFR1 signaling pathway. May play a role in synaptic plasticity. Also acts as a chaperone for ATP2B1; stabilizes ATP2B1 and increases its ATPase activity. Promotes localization of XKR8 at the cell membrane. This chain is Neuroplastin (NPTN), found in Homo sapiens (Human).